The following is a 664-amino-acid chain: Armadillo repeat protein involved in nucleocytoplasmic transport Syo2 (664 aa).

The stretch at 77–119 (GLVSKLIDRISDDSVEVVVEATGALRNLAIEEGYSICMDMYRK) is one ARM repeat.

The protein belongs to the nuclear import and ribosome assembly adapter family. In terms of assembly, forms a heterotrimeric complex with rpl5 and rpl11a or rpl11b; interaction of this complex with kap104 allows the nuclear import of the heterotrimer. Component of a hexameric 5S RNP precursor complex; this complex acts as a precursor for ribosome assembly.

The protein localises to the cytoplasm. Its subcellular location is the nucleus. Functionally, nuclear import adapter that specifically recruits the two functionally and topologically linked ribosomal proteins rpl5 and rpl11 (encoded by rpl11a and rpl11b). Guarantees that this cargo pair remains bound together from the time of synthesis in the cytoplasm until delivery to the nascent 5S rRNA in the nucleus. This Schizosaccharomyces pombe (strain 972 / ATCC 24843) (Fission yeast) protein is Armadillo repeat protein involved in nucleocytoplasmic transport Syo2.